Here is a 590-residue protein sequence, read N- to C-terminus: Suprabasin (590 aa).

A signal peptide spans 1–25 (MHLARLVGSCSLLLLLGALSGWAAS). 4 disordered regions span residues 182–213 (GNEA…AHHG), 242–266 (FGQG…GVHH), 297–338 (GQGA…GVHH), and 545–570 (LNGN…SGAS). Composition is skewed to low complexity over residues 190-200 (QGVHHAAGQAG), 243-254 (GQGAHHAAGQAG), 297-330 (GQGA…NEAG), and 546-559 (NGNH…HQGG). The segment covering 560–570 (ATTTPLASGAS) has biased composition (polar residues).

Detected in thymus, uterus and esophagus.

The protein localises to the secreted. The sequence is that of Suprabasin (SBSN) from Homo sapiens (Human).